We begin with the raw amino-acid sequence, 604 residues long: Putative O-acetyltransferase SACOL0978 (604 aa).

Helical transmembrane passes span 15 to 35 (YIPG…IYHL), 43 to 63 (GFLG…SLLL), 85 to 105 (LLPA…LLKS), 150 to 170 (AIEE…LLTI), 176 to 196 (IGFI…FIYS), 212 to 232 (LQTL…KLKN), 240 to 260 (YVID…FFII), 267 to 287 (IYDG…ASVV), 310 to 330 (YSLY…YVDG), 332 to 352 (IPVY…ELSY), and 377 to 397 (FIRM…LVGA). Catalysis depends on residues Ser-459, Asp-581, and His-584.

This sequence belongs to the acyltransferase 3 family.

It localises to the cell membrane. This Staphylococcus aureus (strain COL) protein is Putative O-acetyltransferase SACOL0978.